Consider the following 662-residue polypeptide: UvrABC system protein B (662 aa).

The Helicase ATP-binding domain maps to 25-411 (DGIIAGDKFQ…STRIVEQVIR (387 aa)). Residue 38 to 45 (GVTGSGKT) participates in ATP binding. A Beta-hairpin motif is present at residues 91 to 114 (YYDYYQPEAYVPARDLYIEKDASI). Residues 428–594 (QMEHIYGEVK…TIKKAIEDIL (167 aa)) enclose the Helicase C-terminal domain. Residues 625-660 (KKLIKKLEAQMAEYADMLMFEEAAVIRDKIEEVKRI) form the UVR domain.

Belongs to the UvrB family. In terms of assembly, forms a heterotetramer with UvrA during the search for lesions. Interacts with UvrC in an incision complex.

The protein resides in the cytoplasm. In terms of biological role, the UvrABC repair system catalyzes the recognition and processing of DNA lesions. A damage recognition complex composed of 2 UvrA and 2 UvrB subunits scans DNA for abnormalities. Upon binding of the UvrA(2)B(2) complex to a putative damaged site, the DNA wraps around one UvrB monomer. DNA wrap is dependent on ATP binding by UvrB and probably causes local melting of the DNA helix, facilitating insertion of UvrB beta-hairpin between the DNA strands. Then UvrB probes one DNA strand for the presence of a lesion. If a lesion is found the UvrA subunits dissociate and the UvrB-DNA preincision complex is formed. This complex is subsequently bound by UvrC and the second UvrB is released. If no lesion is found, the DNA wraps around the other UvrB subunit that will check the other stand for damage. In Treponema denticola (strain ATCC 35405 / DSM 14222 / CIP 103919 / JCM 8153 / KCTC 15104), this protein is UvrABC system protein B.